A 199-amino-acid polypeptide reads, in one-letter code: Pyridoxine/pyridoxamine 5'-phosphate oxidase (199 aa).

Residues 44–49, 59–60, K66, and Q91 each bind FMN; these read RTVLLK and YS. K49 is a binding site for substrate. 3 residues coordinate substrate: Y109, R113, and S117. FMN-binding positions include 126-127 and W171; that span reads QS. 177–179 contributes to the substrate binding site; it reads RLH. R181 contributes to the FMN binding site.

Belongs to the pyridoxamine 5'-phosphate oxidase family. Homodimer. The cofactor is FMN.

It catalyses the reaction pyridoxamine 5'-phosphate + O2 + H2O = pyridoxal 5'-phosphate + H2O2 + NH4(+). The catalysed reaction is pyridoxine 5'-phosphate + O2 = pyridoxal 5'-phosphate + H2O2. The protein operates within cofactor metabolism; pyridoxal 5'-phosphate salvage; pyridoxal 5'-phosphate from pyridoxamine 5'-phosphate: step 1/1. Its pathway is cofactor metabolism; pyridoxal 5'-phosphate salvage; pyridoxal 5'-phosphate from pyridoxine 5'-phosphate: step 1/1. Functionally, catalyzes the oxidation of either pyridoxine 5'-phosphate (PNP) or pyridoxamine 5'-phosphate (PMP) into pyridoxal 5'-phosphate (PLP). This Xanthomonas oryzae pv. oryzae (strain KACC10331 / KXO85) protein is Pyridoxine/pyridoxamine 5'-phosphate oxidase.